A 288-amino-acid chain; its full sequence is Protein FANTASTIC FOUR 3 (288 aa).

A compositionally biased stretch (basic and acidic residues) spans 48 to 60; that stretch reads HAEDTRNRNDDKA. 3 disordered regions span residues 48-100, 146-172, and 222-261; these read HAED…YYVQ, ETTTETRTLKSRKRSVSPSDLPPPLTT, and NEFVENEEETIEPEETEEYEEEEEEEEDEDEDEVMGIENV. Low complexity predominate over residues 66 to 90; the sequence is SDSSGWSSLQSLSSGSSSSTKTTTS. One can recognise an FAF domain in the interval 165–217; sequence DLPPPLTTMRGFQCIQMRPHRENGRLVMTATNAPPRNGCFQADRSNGRLRLSI. Residues 223–256 are compositionally biased toward acidic residues; sequence EFVENEEETIEPEETEEYEEEEEEEEDEDEDEVM.

Belongs to the fantastic four family. Expressed in the shoot apex, stamens, young leaves and young siliques, but not in old leaves. Detected in provascular and vascular tissue, but not in the vegetative meristem. In inflorescences, restricted to the vasculature and absent from young flowers, except from anthers.

In terms of biological role, able to repress WUS when constitutively overexpressed, but have no effect on CLV3. The protein is Protein FANTASTIC FOUR 3 (FAF3) of Arabidopsis thaliana (Mouse-ear cress).